Reading from the N-terminus, the 441-residue chain is Proline--tRNA ligase (441 aa).

The protein belongs to the class-II aminoacyl-tRNA synthetase family. ProS type 2 subfamily. In terms of assembly, homodimer.

The protein localises to the cytoplasm. The enzyme catalyses tRNA(Pro) + L-proline + ATP = L-prolyl-tRNA(Pro) + AMP + diphosphate. Its function is as follows. Catalyzes the attachment of proline to tRNA(Pro) in a two-step reaction: proline is first activated by ATP to form Pro-AMP and then transferred to the acceptor end of tRNA(Pro). In Bartonella henselae (strain ATCC 49882 / DSM 28221 / CCUG 30454 / Houston 1) (Rochalimaea henselae), this protein is Proline--tRNA ligase.